Here is a 333-residue protein sequence, read N- to C-terminus: 4-hydroxyproline epimerase (333 aa).

Catalysis depends on Cys90, which acts as the Proton acceptor. Substrate is bound by residues 91–92 (GH) and Asp249. Cys253 functions as the Proton donor in the catalytic mechanism. 254 to 255 (GT) contributes to the substrate binding site.

This sequence belongs to the proline racemase family. Homodimer.

The catalysed reaction is trans-4-hydroxy-L-proline = cis-4-hydroxy-D-proline. Functionally, allows intracellular utilization of 4-hydroxyproline, one of the major constituents of host collagen, by converting 4-hydroxy-L-proline to 4-hydroxy-D-proline, which can be further metabolized by intracellular 4-hydroxy-D-proline oxidases. Strong B-cell mitogen. Plays an important role in the regulation of intra- and extracellular amino acid pools, allowing the bacterium to profit from host precursors and enzymatic pathways. This chain is 4-hydroxyproline epimerase, found in Brucella abortus (strain S19).